The sequence spans 426 residues: Enolase (426 aa).

A (2R)-2-phosphoglycerate-binding site is contributed by Q163. E205 serves as the catalytic Proton donor. 3 residues coordinate Mg(2+): D242, E285, and D312. Residues K337, R366, S367, and K388 each coordinate (2R)-2-phosphoglycerate. K337 acts as the Proton acceptor in catalysis.

It belongs to the enolase family. Mg(2+) serves as cofactor.

It localises to the cytoplasm. The protein resides in the secreted. The protein localises to the cell surface. The enzyme catalyses (2R)-2-phosphoglycerate = phosphoenolpyruvate + H2O. Its pathway is carbohydrate degradation; glycolysis; pyruvate from D-glyceraldehyde 3-phosphate: step 4/5. Functionally, catalyzes the reversible conversion of 2-phosphoglycerate (2-PG) into phosphoenolpyruvate (PEP). It is essential for the degradation of carbohydrates via glycolysis. This chain is Enolase, found in Phenylobacterium zucineum (strain HLK1).